A 121-amino-acid polypeptide reads, in one-letter code: NADH-ubiquinone oxidoreductase chain 3 (121 aa).

The next 3 membrane-spanning stretches (helical) occupy residues 11 to 31, 63 to 83, and 90 to 110; these read ILTFFAISFSISTLILALSYF, FYLVAILFLIFDLEISFLFPW, and LSIFGFWSMIVFLIILTLGFI.

It belongs to the complex I subunit 3 family.

The protein localises to the mitochondrion membrane. It carries out the reaction a ubiquinone + NADH + 5 H(+)(in) = a ubiquinol + NAD(+) + 4 H(+)(out). Functionally, core subunit of the mitochondrial membrane respiratory chain NADH dehydrogenase (Complex I) that is believed to belong to the minimal assembly required for catalysis. Complex I functions in the transfer of electrons from NADH to the respiratory chain. The immediate electron acceptor for the enzyme is believed to be ubiquinone. The sequence is that of NADH-ubiquinone oxidoreductase chain 3 (NAD3) from Porphyra purpurea (Red seaweed).